Here is a 331-residue protein sequence, read N- to C-terminus: Aspartate carbamoyltransferase catalytic subunit (331 aa).

Arginine 62 and threonine 63 together coordinate carbamoyl phosphate. Lysine 90 is a binding site for L-aspartate. Positions 112, 145, and 148 each coordinate carbamoyl phosphate. L-aspartate-binding residues include arginine 185 and arginine 246. Positions 287 and 288 each coordinate carbamoyl phosphate.

The protein belongs to the aspartate/ornithine carbamoyltransferase superfamily. ATCase family. Heterododecamer (2C3:3R2) of six catalytic PyrB chains organized as two trimers (C3), and six regulatory PyrI chains organized as three dimers (R2).

The catalysed reaction is carbamoyl phosphate + L-aspartate = N-carbamoyl-L-aspartate + phosphate + H(+). It functions in the pathway pyrimidine metabolism; UMP biosynthesis via de novo pathway; (S)-dihydroorotate from bicarbonate: step 2/3. Functionally, catalyzes the condensation of carbamoyl phosphate and aspartate to form carbamoyl aspartate and inorganic phosphate, the committed step in the de novo pyrimidine nucleotide biosynthesis pathway. In Synechocystis sp. (strain ATCC 27184 / PCC 6803 / Kazusa), this protein is Aspartate carbamoyltransferase catalytic subunit.